Consider the following 190-residue polypeptide: Subtilisin inhibitor CLSI-II (190 aa).

2 disulfides stabilise this stretch: cysteine 44–cysteine 88 and cysteine 142–cysteine 149.

Belongs to the protease inhibitor I3 (leguminous Kunitz-type inhibitor) family. Forms active dimers on storage in aqueous solution, possibly through formation of an intermolecular disulfide bond. Post-translationally, the N-terminal Asn is removed in about 50% of both the CLSI-II and CLSI-III chains.

The protein localises to the secreted. In terms of biological role, inhibits subtilisin-type microbial serine proteases incuding proteinase K, subtilisin BPN', subtilisin Carlsberg and subtilisin E in a non-stoichiometric manner. Weakly inhibits A.oryzae protease and some metalloproteases including pronase E. Does not inhibit trypsin, chymotrypsin, S.griseus alkaline protease or A.lyticus lysyl endopeptidase. CLSI-II has a wider inhibitory specificity than CLSI-III. This is Subtilisin inhibitor CLSI-II from Canavalia lineata (Beach bean).